We begin with the raw amino-acid sequence, 426 residues long: Glucose-1-phosphate adenylyltransferase (426 aa).

Alpha-D-glucose 1-phosphate is bound by residues glycine 165, 180 to 181, and serine 191; that span reads EK.

This sequence belongs to the bacterial/plant glucose-1-phosphate adenylyltransferase family. As to quaternary structure, homotetramer.

The enzyme catalyses alpha-D-glucose 1-phosphate + ATP + H(+) = ADP-alpha-D-glucose + diphosphate. It functions in the pathway glycan biosynthesis; glycogen biosynthesis. Its function is as follows. Involved in the biosynthesis of ADP-glucose, a building block required for the elongation reactions to produce glycogen. Catalyzes the reaction between ATP and alpha-D-glucose 1-phosphate (G1P) to produce pyrophosphate and ADP-Glc. The protein is Glucose-1-phosphate adenylyltransferase of Ruminiclostridium cellulolyticum (strain ATCC 35319 / DSM 5812 / JCM 6584 / H10) (Clostridium cellulolyticum).